The sequence spans 351 residues: uncharacterized protein (351 aa).

Aspartate 215, aspartate 226, histidine 290, glutamate 319, and glutamate 333 together coordinate Mn(2+).

The protein belongs to the peptidase M24B family. Requires Mn(2+) as cofactor.

This is an uncharacterized protein from Staphylococcus aureus (strain USA300).